The primary structure comprises 259 residues: Ribosomal RNA small subunit methyltransferase A (259 aa).

S-adenosyl-L-methionine is bound by residues Asn13, Leu15, Gly39, Glu60, Asp84, and Asn101.

The protein belongs to the class I-like SAM-binding methyltransferase superfamily. rRNA adenine N(6)-methyltransferase family. RsmA subfamily.

The protein localises to the cytoplasm. It catalyses the reaction adenosine(1518)/adenosine(1519) in 16S rRNA + 4 S-adenosyl-L-methionine = N(6)-dimethyladenosine(1518)/N(6)-dimethyladenosine(1519) in 16S rRNA + 4 S-adenosyl-L-homocysteine + 4 H(+). Functionally, specifically dimethylates two adjacent adenosines (A1518 and A1519) in the loop of a conserved hairpin near the 3'-end of 16S rRNA in the 30S particle. May play a critical role in biogenesis of 30S subunits. The sequence is that of Ribosomal RNA small subunit methyltransferase A from Mesomycoplasma hyopneumoniae (strain 232) (Mycoplasma hyopneumoniae).